We begin with the raw amino-acid sequence, 28 residues long: Phospholipase A2 pseudexin C chain (28 aa).

Tyrosine 28 contributes to the Ca(2+) binding site.

Belongs to the phospholipase A2 family. Group I subfamily. Ca(2+) serves as cofactor. As to expression, expressed by the venom gland.

Its subcellular location is the secreted. It carries out the reaction a 1,2-diacyl-sn-glycero-3-phosphocholine + H2O = a 1-acyl-sn-glycero-3-phosphocholine + a fatty acid + H(+). Functionally, PLA2 catalyzes the calcium-dependent hydrolysis of the 2-acyl groups in 3-sn-phosphoglycerides. This Pseudechis porphyriacus (Red-bellied black snake) protein is Phospholipase A2 pseudexin C chain.